We begin with the raw amino-acid sequence, 276 residues long: Protein-glutamine gamma-glutamyltransferase (276 aa).

This sequence belongs to the bacillus TGase family.

The catalysed reaction is L-glutaminyl-[protein] + L-lysyl-[protein] = [protein]-L-lysyl-N(6)-5-L-glutamyl-[protein] + NH4(+). Its function is as follows. Probably plays a role in the assembly of the spore coat proteins by catalyzing epsilon-(gamma-glutamyl)lysine cross-links. This is Protein-glutamine gamma-glutamyltransferase from Bacillus cereus (strain G9842).